Consider the following 376-residue polypeptide: UDP-N-acetylglucosamine--N-acetylmuramyl-(pentapeptide) pyrophosphoryl-undecaprenol N-acetylglucosamine transferase (376 aa).

UDP-N-acetyl-alpha-D-glucosamine-binding positions include 12–14 (TGG), asparagine 125, arginine 165, serine 197, and glutamine 296.

It belongs to the glycosyltransferase 28 family. MurG subfamily.

Its subcellular location is the cell inner membrane. The enzyme catalyses di-trans,octa-cis-undecaprenyl diphospho-N-acetyl-alpha-D-muramoyl-L-alanyl-D-glutamyl-meso-2,6-diaminopimeloyl-D-alanyl-D-alanine + UDP-N-acetyl-alpha-D-glucosamine = di-trans,octa-cis-undecaprenyl diphospho-[N-acetyl-alpha-D-glucosaminyl-(1-&gt;4)]-N-acetyl-alpha-D-muramoyl-L-alanyl-D-glutamyl-meso-2,6-diaminopimeloyl-D-alanyl-D-alanine + UDP + H(+). The protein operates within cell wall biogenesis; peptidoglycan biosynthesis. In terms of biological role, cell wall formation. Catalyzes the transfer of a GlcNAc subunit on undecaprenyl-pyrophosphoryl-MurNAc-pentapeptide (lipid intermediate I) to form undecaprenyl-pyrophosphoryl-MurNAc-(pentapeptide)GlcNAc (lipid intermediate II). This chain is UDP-N-acetylglucosamine--N-acetylmuramyl-(pentapeptide) pyrophosphoryl-undecaprenol N-acetylglucosamine transferase, found in Protochlamydia amoebophila (strain UWE25).